A 487-amino-acid chain; its full sequence is Histamine H1 receptor (487 aa).

Over 1–29 the chain is Extracellular; it reads MSLPNSSCLLEDKMCEGNKTTMASPQLMP. Asn5 and Asn18 each carry an N-linked (GlcNAc...) asparagine glycan. Residues 30 to 50 traverse the membrane as a helical segment; sequence LVVVLSTICLVTVGLNLLVLY. Residues 51-64 lie on the Cytoplasmic side of the membrane; the sequence is AVRSERKLHTVGNL. A helical membrane pass occupies residues 65–89; that stretch reads YIVSLSVADLIVGAVVMPMNILYLL. Residues 90-97 are Extracellular-facing; the sequence is MSKWSLGR. The helical transmembrane segment at 98 to 123 threads the bilayer; that stretch reads PLCLFWLSMDYVASTASIFSVFILCI. A disulfide bond links Cys100 and Cys180. Asp107 and Thr112 together coordinate histamine. The segment at 107–112 is important for agonist binding; that stretch reads DYVAST. Residues 124–144 are Cytoplasmic-facing; sequence DRYRSVQQPLRYLKYRTKTRA. Thr140 and Thr142 each carry phosphothreonine. A helical membrane pass occupies residues 145–164; sequence SATILGAWFLSFLWVIPILG. Topologically, residues 165-188 are extracellular; that stretch reads WNHFMQQTSVRREDKCETDFYDVT. Residues 189–211 form a helical membrane-spanning segment; that stretch reads WFKVMTAIINFYLPTLLMLWFYA. Histamine is bound at residue Asn198. Over 212–416 the chain is Cytoplasmic; that stretch reads KIYKAVRQHC…MNRERKAAKQ (205 aa). Residue Ser230 is modified to Phosphoserine. Residues 238–261 are compositionally biased toward basic and acidic residues; it reads KLRPENPKGDAKKPGKESPWEVLK. A disordered region spans residues 238 to 291; sequence KLRPENPKGDAKKPGKESPWEVLKRKPKDAGGGSVLKSPSQTPKEMKSPVVFSQ. At Thr279 the chain carries Phosphothreonine. Phosphoserine occurs at positions 344 and 347. Residues 345-379 form a disordered region; that stretch reads EISEDQMLGDSQSFSRTDSDTTTETAPGKGKLRSG. A compositionally biased stretch (polar residues) spans 353-369; it reads GDSQSFSRTDSDTTTET. Phosphoserine is present on residues Ser380, Ser396, and Ser398. A helical membrane pass occupies residues 417–440; that stretch reads LGFIMAAFILCWIPYFIFFMVIAF. The interval 424–428 is important for agonist binding; that stretch reads FILCW. Residue Tyr431 participates in histamine binding. An intrachain disulfide couples Cys441 to Cys444. The Extracellular portion of the chain corresponds to 441 to 446; that stretch reads CKNCCN. The chain crosses the membrane as a helical span at residues 447-469; it reads EHLHMFTIWLGYINSTLNPLIYP. Topologically, residues 470–487 are cytoplasmic; the sequence is LCNENFKKTFKRILHIRS.

Belongs to the G-protein coupled receptor 1 family. Phosphorylation at sites in the second and third cytoplasmic loops independently contribute to agonist-induced receptor down-regulation.

The protein resides in the cell membrane. G-protein-coupled receptor for histamine, a biogenic amine that functions as an immune modulator and a neurotransmitter. Through the H1 receptor, histamine mediates the contraction of smooth muscles and increases capillary permeability due to contraction of terminal venules. Also mediates neurotransmission in the central nervous system and thereby regulates circadian rhythms, emotional and locomotor activities as well as cognitive functions. The protein is Histamine H1 receptor of Homo sapiens (Human).